The chain runs to 341 residues: GTP-binding protein REM 2 (341 aa).

The segment covering 1-13 (MHTDLDTDMDMDT) has biased composition (acidic residues). Disordered stretches follow at residues 1–71 (MHTD…GSMP) and 84–106 (VDEL…GSGE). The segment covering 18-30 (LCSSSSRQASPLG) has biased composition (polar residues). At S27 the chain carries Phosphoserine. A compositionally biased stretch (low complexity) spans 90 to 106 (PPQASPSGSSDSLGSGE). GTP-binding positions include 122–129 (GESGVGKS), 230–233 (NKSD), and 261–262 (AA). The tract at residues 282–309 (RGRGHAGGQRPEPSSPDGPAPPTRRESL) is disordered. Pro residues predominate over residues 294–303 (PSSPDGPAPP). Phosphoserine is present on S296.

Belongs to the small GTPase superfamily. RGK family.

Its subcellular location is the cell membrane. Functionally, binds GTP saturably and exhibits a low intrinsic rate of GTP hydrolysis. The protein is GTP-binding protein REM 2 (Rem2) of Mus musculus (Mouse).